A 103-amino-acid chain; its full sequence is MQKIRKGDSVVVLSGKDKGRKGEVLKVMPKDEQALVSGINIVKRHQRQTQTQEAGIISKEAPIHLSNLAIADPKDGKPTRIGFRVEDGKKVRVAKRSGALIDG.

The protein belongs to the universal ribosomal protein uL24 family. As to quaternary structure, part of the 50S ribosomal subunit.

Functionally, one of two assembly initiator proteins, it binds directly to the 5'-end of the 23S rRNA, where it nucleates assembly of the 50S subunit. One of the proteins that surrounds the polypeptide exit tunnel on the outside of the subunit. The sequence is that of Large ribosomal subunit protein uL24 from Brucella ovis (strain ATCC 25840 / 63/290 / NCTC 10512).